A 230-amino-acid polypeptide reads, in one-letter code: Ion-translocating oxidoreductase complex subunit E (230 aa).

A run of 6 helical transmembrane segments spans residues 18-38 (ALVQ…ATNA), 39-59 (LGLG…VSAL), 63-83 (TPAE…VSAV), 86-106 (LINA…PLIV), 125-145 (WLSA…MFVL), and 182-202 (PFLL…MLAV).

The protein belongs to the NqrDE/RnfAE family. In terms of assembly, the complex is composed of six subunits: RsxA, RsxB, RsxC, RsxD, RsxE and RsxG.

The protein localises to the cell inner membrane. Its function is as follows. Part of a membrane-bound complex that couples electron transfer with translocation of ions across the membrane. Required to maintain the reduced state of SoxR. The protein is Ion-translocating oxidoreductase complex subunit E of Salmonella arizonae (strain ATCC BAA-731 / CDC346-86 / RSK2980).